The following is a 278-amino-acid chain: MRSIFIVPIFLLFLSSCSEEKTQNKNQEEKQIIVQETLQNNNTSQEINQEAVNSENAAESIVPANDNNQTDEVSTPPSQEQKNPEIKPVKVTFKVDDNDMVLGNKKSNVIVVEYFSPTCPHCAYYHQTIFPELKKKYIDTNKIAYVVREFIATKQDLDAAILARCKGDINSFVQFHNIILQQQDKWAYSNKYRELLTDIGQLGGVPPEEYKQCLNSDKITETLIANTNFVANAPKFIGTPSFFVNGVQTGNYSIDSISTAVDKALEEQKEKAKNEMSL.

An N-terminal signal peptide occupies residues 1-18 (MRSIFIVPIFLLFLSSCS). The interval 62–84 (VPANDNNQTDEVSTPPSQEQKNP) is disordered. Over residues 65–81 (NDNNQTDEVSTPPSQEQ) the composition is skewed to polar residues. The Thioredoxin domain occupies 77–266 (PSQEQKNPEI…ISTAVDKALE (190 aa)). Cysteine 119 and cysteine 122 are joined by a disulfide.

Belongs to the thioredoxin family. DsbA subfamily.

The protein resides in the periplasm. May be required for disulfide bond formation in some proteins. This Rickettsia felis (strain ATCC VR-1525 / URRWXCal2) (Rickettsia azadi) protein is Putative protein-disulfide oxidoreductase RF_0032.